A 93-amino-acid polypeptide reads, in one-letter code: Large ribosomal subunit protein uL23cz/uL23cy (93 aa).

This sequence belongs to the universal ribosomal protein uL23 family. As to quaternary structure, part of the 50S ribosomal subunit.

Its subcellular location is the plastid. It is found in the chloroplast. Its function is as follows. Binds to 23S rRNA. This is Large ribosomal subunit protein uL23cz/uL23cy (rpl23-A) from Jasminum nudiflorum (Winter jasmine).